The chain runs to 498 residues: Nucleobase transporter PlAzg2 (498 aa).

A run of 13 helical transmembrane segments spans residues 88–108 (LLAG…NSSI), 118–138 (AGII…GLWG), 142–162 (LVIV…VQGM), 169–189 (ALAA…TSLV), 203–223 (AISV…GGVI), 236–256 (FADP…ILYI), 259–279 (VPGN…LFKA), 312–332 (TLVI…VGLI), 357–377 (ILSG…AAGI), 388–408 (IATG…TLVP), 412–432 (VAPI…HISF), 443–463 (FIIA…IGFI), and 478–498 (VKPL…LQTM).

Belongs to the nucleobase:cation symporter-2 (NCS2) (TC 2.A.40) family. Azg-like subfamily.

It localises to the cell membrane. With respect to regulation, inhibited by the proton gradient disruptor carbonyl cyanide m-chlorophenylhydrazone (CCCP), but not by the sodium gradient disruptor ouabain. Functionally, transports adenine, guanine, hypoxanthine, xanthine, cytosine and uracil. Transport is probably proton-dependent. This Paenibacillus larvae subsp. larvae (strain NRRL B-3650 / LMG 16245) protein is Nucleobase transporter PlAzg2.